The following is a 301-amino-acid chain: Acetylglutamate kinase (301 aa).

Substrate-binding positions include 68–69, R90, and N197; that span reads GG.

It belongs to the acetylglutamate kinase family. ArgB subfamily.

The protein resides in the cytoplasm. It carries out the reaction N-acetyl-L-glutamate + ATP = N-acetyl-L-glutamyl 5-phosphate + ADP. It functions in the pathway amino-acid biosynthesis; L-arginine biosynthesis; N(2)-acetyl-L-ornithine from L-glutamate: step 2/4. Catalyzes the ATP-dependent phosphorylation of N-acetyl-L-glutamate. The sequence is that of Acetylglutamate kinase from Nitrosococcus oceani (strain ATCC 19707 / BCRC 17464 / JCM 30415 / NCIMB 11848 / C-107).